Reading from the N-terminus, the 900-residue chain is Isoleucine--tRNA ligase (900 aa).

Positions 59–69 match the 'HIGH' region motif; the sequence is PYANGNIHMGH. Residue glutamate 550 coordinates L-isoleucyl-5'-AMP. Positions 591 to 595 match the 'KMSKS' region motif; sequence KMSKS. Position 594 (lysine 594) interacts with ATP. Residues cysteine 876, cysteine 879, cysteine 892, and cysteine 895 each coordinate Zn(2+).

Belongs to the class-I aminoacyl-tRNA synthetase family. IleS type 1 subfamily. As to quaternary structure, monomer. The cofactor is Zn(2+).

The protein resides in the cytoplasm. It catalyses the reaction tRNA(Ile) + L-isoleucine + ATP = L-isoleucyl-tRNA(Ile) + AMP + diphosphate. Its function is as follows. Catalyzes the attachment of isoleucine to tRNA(Ile). As IleRS can inadvertently accommodate and process structurally similar amino acids such as valine, to avoid such errors it has two additional distinct tRNA(Ile)-dependent editing activities. One activity is designated as 'pretransfer' editing and involves the hydrolysis of activated Val-AMP. The other activity is designated 'posttransfer' editing and involves deacylation of mischarged Val-tRNA(Ile). The polypeptide is Isoleucine--tRNA ligase (Onion yellows phytoplasma (strain OY-M)).